The primary structure comprises 379 residues: Cytochrome b (379 aa).

The next 4 membrane-spanning stretches (helical) occupy residues 33-53, 77-98, 113-133, and 178-198; these read FGSL…FLAM, WLIR…FIHV, WNIG…GYVL, and FFAF…VHLL. Heme b contacts are provided by histidine 83 and histidine 97. The heme b site is built by histidine 182 and histidine 196. An a ubiquinone-binding site is contributed by histidine 201. The next 4 helical transmembrane spans lie at 226–246, 288–308, 320–340, and 347–367; these read TKDL…ALFF, LGGV…PLLN, VTQV…WIGG, and FTTI…ILIP.

This sequence belongs to the cytochrome b family. The cytochrome bc1 complex contains 11 subunits: 3 respiratory subunits (MT-CYB, CYC1 and UQCRFS1), 2 core proteins (UQCRC1 and UQCRC2) and 6 low-molecular weight proteins (UQCRH/QCR6, UQCRB/QCR7, UQCRQ/QCR8, UQCR10/QCR9, UQCR11/QCR10 and a cleavage product of UQCRFS1). This cytochrome bc1 complex then forms a dimer. It depends on heme b as a cofactor.

It localises to the mitochondrion inner membrane. Component of the ubiquinol-cytochrome c reductase complex (complex III or cytochrome b-c1 complex) that is part of the mitochondrial respiratory chain. The b-c1 complex mediates electron transfer from ubiquinol to cytochrome c. Contributes to the generation of a proton gradient across the mitochondrial membrane that is then used for ATP synthesis. This Akodon mystax (Caparao grass mouse) protein is Cytochrome b (MT-CYB).